A 675-amino-acid polypeptide reads, in one-letter code: DNA ligase (675 aa).

Residues 33–37 (DAEYD), 82–83 (SL), and E114 each bind NAD(+). K116 (N6-AMP-lysine intermediate) is an active-site residue. NAD(+) is bound by residues R137, E174, K291, and K315. Residues C409, C412, C427, and C433 each coordinate Zn(2+). The BRCT domain occupies 595–675 (AGDNPFAGKT…EMIRLLDQSK (81 aa)).

It belongs to the NAD-dependent DNA ligase family. LigA subfamily. Requires Mg(2+) as cofactor. Mn(2+) is required as a cofactor.

It catalyses the reaction NAD(+) + (deoxyribonucleotide)n-3'-hydroxyl + 5'-phospho-(deoxyribonucleotide)m = (deoxyribonucleotide)n+m + AMP + beta-nicotinamide D-nucleotide.. Its function is as follows. DNA ligase that catalyzes the formation of phosphodiester linkages between 5'-phosphoryl and 3'-hydroxyl groups in double-stranded DNA using NAD as a coenzyme and as the energy source for the reaction. It is essential for DNA replication and repair of damaged DNA. This is DNA ligase from Proteus mirabilis (strain HI4320).